Here is a 331-residue protein sequence, read N- to C-terminus: Probable cytosolic iron-sulfur protein assembly protein Ciao1 (331 aa).

WD repeat units lie at residues 12 to 51 (GHKG…WTTK), 57 to 96 (GHKR…ATLE), 97 to 136 (GHEN…EFEC), 142 to 181 (AHTQ…SDWD), 188 to 227 (SHTS…NEAG), 246 to 285 (QHSR…KRDE), and 297 to 331 (AHEQ…KLQE).

It belongs to the WD repeat CIA1 family.

In terms of biological role, essential component of the cytosolic iron-sulfur (Fe/S) protein assembly machinery. Required for the maturation of extramitochondrial Fe/S proteins. The sequence is that of Probable cytosolic iron-sulfur protein assembly protein Ciao1 from Drosophila grimshawi (Hawaiian fruit fly).